Consider the following 198-residue polypeptide: Small ribosomal subunit protein uS2 (198 aa).

Belongs to the universal ribosomal protein uS2 family.

This is Small ribosomal subunit protein uS2 from Methanobrevibacter smithii (strain ATCC 35061 / DSM 861 / OCM 144 / PS).